The primary structure comprises 428 residues: Maltoporin (428 aa).

The signal sequence occupies residues 1–24; the sequence is MKSMRILPISLTIMAGLLSIEASA.

Belongs to the porin LamB (TC 1.B.3) family. Homotrimer formed of three 18-stranded antiparallel beta-barrels, containing three independent channels.

It is found in the cell outer membrane. It carries out the reaction beta-maltose(in) = beta-maltose(out). Its function is as follows. Involved in the transport of maltose and maltodextrins. The polypeptide is Maltoporin (Photorhabdus laumondii subsp. laumondii (strain DSM 15139 / CIP 105565 / TT01) (Photorhabdus luminescens subsp. laumondii)).